The following is an 834-amino-acid chain: Probable glucan 1,3-beta-glucosidase D (834 aa).

Positions 1–33 (MPSHSRSRDRYGGRDSDREARYDYDYARRRYAT) are enriched in basic and acidic residues. Disordered regions lie at residues 1-188 (MPSH…ASHL) and 200-251 (QYEK…TKAR). Over 1–306 (MPSHSRSRDR…GGRPFWKRKK (306 aa)) the chain is Cytoplasmic. Over residues 34 to 45 (DDNDDDYDDDEL) the composition is skewed to acidic residues. Composition is skewed to basic and acidic residues over residues 46 to 76 (EHGL…RDAE), 98 to 173 (YGHD…ETAA), 201 to 218 (YEKE…AAKA), and 228 to 245 (VVGE…ESHR). Residues 307–327 (WIGLGALILILVIVIPVAVVV) traverse the membrane as a helical; Signal-anchor for type II membrane protein segment. At 328 to 834 (SKKHDNKSDP…PDFGNLPEYY (507 aa)) the chain is on the extracellular side. The interval 331-354 (HDNKSDPADPQGTSPGKSNLDGLS) is disordered. Residues N333, N379, N384, N396, N549, N561, and N570 are each glycosylated (N-linked (GlcNAc...) asparagine). The Proton donor role is filled by E600. N639, N672, and N692 each carry an N-linked (GlcNAc...) asparagine glycan. The active-site Nucleophile is E705.

Belongs to the glycosyl hydrolase 5 (cellulase A) family.

The protein resides in the cell membrane. It carries out the reaction Successive hydrolysis of beta-D-glucose units from the non-reducing ends of (1-&gt;3)-beta-D-glucans, releasing alpha-glucose.. Functionally, glucosidase involved in the degradation of cellulosic biomass. Active on lichenan. The protein is Probable glucan 1,3-beta-glucosidase D (exgD) of Neosartorya fischeri (strain ATCC 1020 / DSM 3700 / CBS 544.65 / FGSC A1164 / JCM 1740 / NRRL 181 / WB 181) (Aspergillus fischerianus).